Consider the following 1366-residue polypeptide: DNA-directed RNA polymerase subunit beta' (1366 aa).

The segment covering 1–20 has biased composition (basic residues); sequence MTSSKPKKTSRVRKTTKNSK. The interval 1–37 is disordered; it reads MTSSKPKKTSRVRKTTKNSKKNNPVTMPVLPKTPPSF. Zn(2+) contacts are provided by C248, C315, C322, and C325. The segment at 1292 to 1366 is disordered; that stretch reads TVDMPQSPAV…LQEEGLLSDE (75 aa). The span at 1354–1366 shows a compositional bias: low complexity; that stretch reads LEGLQEEGLLSDE.

This sequence belongs to the RNA polymerase beta' chain family. RpoC2 subfamily. In terms of assembly, in cyanobacteria the RNAP catalytic core is composed of 2 alpha, 1 beta, 1 beta', 1 gamma and 1 omega subunit. When a sigma factor is associated with the core the holoenzyme is formed, which can initiate transcription. The cofactor is Zn(2+).

It carries out the reaction RNA(n) + a ribonucleoside 5'-triphosphate = RNA(n+1) + diphosphate. DNA-dependent RNA polymerase catalyzes the transcription of DNA into RNA using the four ribonucleoside triphosphates as substrates. This chain is DNA-directed RNA polymerase subunit beta', found in Prochlorococcus marinus (strain MIT 9215).